Here is a 481-residue protein sequence, read N- to C-terminus: Probable myosin light chain kinase DDB_G0284661 (481 aa).

The 257-residue stretch at 13 to 269 (YNITDIIGEG…VKQSLAHKWI (257 aa)) folds into the Protein kinase domain. ATP-binding positions include 19–27 (IGEGTFSTV) and lysine 43. Residue aspartate 136 is the Proton acceptor of the active site. 2 disordered regions span residues 285–315 (PLIT…PSLK) and 345–427 (SNSH…DDDE). A compositionally biased stretch (low complexity) spans 379–421 (SNNNINNNNDNNDNNNSNSNNSNNNINNFINNNNNNNNNNSNF).

Belongs to the protein kinase superfamily. CAMK Ser/Thr protein kinase family. CaMK subfamily.

It catalyses the reaction L-seryl-[myosin light chain] + ATP = O-phospho-L-seryl-[myosin light chain] + ADP + H(+). The enzyme catalyses L-threonyl-[myosin light chain] + ATP = O-phospho-L-threonyl-[myosin light chain] + ADP + H(+). Its activity is regulated as follows. Does not have a calmodulin-binding domain. In terms of biological role, may phosphorylate a specific serine in the N-terminus of a myosin light chain. The protein is Probable myosin light chain kinase DDB_G0284661 of Dictyostelium discoideum (Social amoeba).